Here is a 730-residue protein sequence, read N- to C-terminus: GTPase-activating protein GYP7 (730 aa).

The 186-residue stretch at 434 to 619 folds into the Rab-GAP TBC domain; that stretch reads VQEDKERDDF…RLWEVLWTDY (186 aa).

Most effectively accelerate the intrinsic GTPase activity of YPT7. It is also active, but to a lesser extent, on YPT31, YPT32 and YPT1. YPT6 and SEC4. In Yarrowia lipolytica (strain CLIB 122 / E 150) (Yeast), this protein is GTPase-activating protein GYP7 (GYP7).